A 155-amino-acid chain; its full sequence is Transcriptional repressor NrdR (155 aa).

Residues 3 to 34 (CPYCGHLEDRVVDSRETQDGQATRRRRACLSC) fold into a zinc finger. In terms of domain architecture, ATP-cone spans 49–139 (PQVVKKDGRR…VYRAFRDVGE (91 aa)).

Belongs to the NrdR family. Zn(2+) is required as a cofactor.

Functionally, negatively regulates transcription of bacterial ribonucleotide reductase nrd genes and operons by binding to NrdR-boxes. In Anaeromyxobacter sp. (strain K), this protein is Transcriptional repressor NrdR.